A 183-amino-acid chain; its full sequence is Anterior gradient protein 1 (183 aa).

The signal sequence occupies residues 1–18 (MQAGLSLVCLVLLCSALG).

The protein belongs to the AGR family. As to expression, from stage 18 (neurula) onward, expressed in the cement gland until it degenerates. More weakly expressed in the adjacent hatching gland.

It localises to the secreted. In terms of biological role, does not appear to be required for cement gland formation. This chain is Anterior gradient protein 1 (ag1), found in Xenopus laevis (African clawed frog).